The primary structure comprises 362 residues: MRLMVSGGGTGGHIYPALALIKQVKQSEPDSQILYVGTSKGLESKIVPDSGIDFKTINIQGFKRSLSLENFKTIGLFLSSVVKARKMVKEFKPDVVLGTGGYVSGAVVFAASMMGVPTVIHEQNSVVGVTNKFLSKFVKKIAISFEAAASQFPTKKVVLTGNPRATEVAQIKPSGLSQFGLDDKVPTVLIFGGSRGAEKINQVTIDTLEELMERPYQTIFVTGRVHFERLTKDIDLAKYQGKIAILPYIANMPEILSNMEVIVGRAGATSLAEITSLGIPSILIPSPYVTNDHQTKNAMSLVNNDAAEIIKESDLTSEALINTLDTLMLDQKFRNVMAENAKKMGQPRAAENLYDVLKSVSK.

Residues 10–12, Asn-124, Ser-194, Ile-249, and Gln-294 each bind UDP-N-acetyl-alpha-D-glucosamine; that span reads TGG.

This sequence belongs to the glycosyltransferase 28 family. MurG subfamily.

The protein resides in the cell membrane. The enzyme catalyses Mur2Ac(oyl-L-Ala-gamma-D-Glu-L-Lys-D-Ala-D-Ala)-di-trans,octa-cis-undecaprenyl diphosphate + UDP-N-acetyl-alpha-D-glucosamine = beta-D-GlcNAc-(1-&gt;4)-Mur2Ac(oyl-L-Ala-gamma-D-Glu-L-Lys-D-Ala-D-Ala)-di-trans,octa-cis-undecaprenyl diphosphate + UDP + H(+). It functions in the pathway cell wall biogenesis; peptidoglycan biosynthesis. In terms of biological role, cell wall formation. Catalyzes the transfer of a GlcNAc subunit on undecaprenyl-pyrophosphoryl-MurNAc-pentapeptide (lipid intermediate I) to form undecaprenyl-pyrophosphoryl-MurNAc-(pentapeptide)GlcNAc (lipid intermediate II). The protein is UDP-N-acetylglucosamine--N-acetylmuramyl-(pentapeptide) pyrophosphoryl-undecaprenol N-acetylglucosamine transferase of Pediococcus pentosaceus (strain ATCC 25745 / CCUG 21536 / LMG 10740 / 183-1w).